A 31-amino-acid polypeptide reads, in one-letter code: Fibrinogen beta chain (31 aa).

Acidic residues predominate over residues 1–10 (HYYDDTDEEE). Residues 1-31 (HYYDDTDEEERIVSTVDARGHRPLDKKREEA) are disordered. Sulfotyrosine; partial is present on Y2. Position 3 is a sulfotyrosine (Y3). Residues 18-31 (ARGHRPLDKKREEA) show a composition bias toward basic and acidic residues.

In terms of assembly, heterohexamer; disulfide linked. Contains 2 sets of 3 non-identical chains (alpha, beta and gamma). The 2 heterotrimers are in head to head conformation with the N-termini in a small central domain. In terms of processing, conversion of fibrinogen to fibrin is triggered by thrombin, which cleaves fibrinopeptides A and B from alpha and beta chains, and thus exposes the N-terminal polymerization sites responsible for the formation of the soft clot.

Its subcellular location is the secreted. In terms of biological role, cleaved by the protease thrombin to yield monomers which, together with fibrinogen alpha (FGA) and fibrinogen gamma (FGG), polymerize to form an insoluble fibrin matrix. Fibrin has a major function in hemostasis as one of the primary components of blood clots. In addition, functions during the early stages of wound repair to stabilize the lesion and guide cell migration during re-epithelialization. Was originally thought to be essential for platelet aggregation, based on in vitro studies using anticoagulated blood. However subsequent studies have shown that it is not absolutely required for thrombus formation in vivo. Enhances expression of SELP in activated platelets. Maternal fibrinogen is essential for successful pregnancy. Fibrin deposition is also associated with infection, where it protects against IFNG-mediated hemorrhage. May also facilitate the antibacterial immune response via both innate and T-cell mediated pathways. This Canis lupus familiaris (Dog) protein is Fibrinogen beta chain (FGB).